Here is a 219-residue protein sequence, read N- to C-terminus: MTQDELKKAVGWAALQYVQPGTIVGVGTGSTAAHFIDALGTMKGQIEGAVSSSDASTEKLKGLGIHVFDLNEVDSLGIYVDGADEINGHMQMIKGGGAALTREKIIASVAEKFICIADASKQVDILGKFPLPVEVIPMARSAVARQLVKLGGRPEYRQGVVTDNGNVILDVYGMEILDPIALENAINAIPGVVTVGLFANRGADVALIGTPDGVKTIVK.

Residues 28–31 (TGST), 81–84 (DGAD), and 94–97 (KGGG) contribute to the substrate site. The Proton acceptor role is filled by Glu-103. Lys-121 contributes to the substrate binding site.

This sequence belongs to the ribose 5-phosphate isomerase family. In terms of assembly, homodimer.

It carries out the reaction aldehydo-D-ribose 5-phosphate = D-ribulose 5-phosphate. It functions in the pathway carbohydrate degradation; pentose phosphate pathway; D-ribose 5-phosphate from D-ribulose 5-phosphate (non-oxidative stage): step 1/1. In terms of biological role, catalyzes the reversible conversion of ribose-5-phosphate to ribulose 5-phosphate. This Salmonella arizonae (strain ATCC BAA-731 / CDC346-86 / RSK2980) protein is Ribose-5-phosphate isomerase A.